The sequence spans 119 residues: Putative F420H(2)-dependent quinone reductase Rv3178 (119 aa).

Coenzyme F420-(gamma-Glu)n contacts are provided by residues 21-23 (RKS), 27-32 (FVAPLL), 43-46 (VASA), and 54-58 (QWYRN).

It belongs to the F420H(2)-dependent quinone reductase family.

The protein localises to the cell membrane. It carries out the reaction oxidized coenzyme F420-(gamma-L-Glu)(n) + a quinol + H(+) = reduced coenzyme F420-(gamma-L-Glu)(n) + a quinone. Functionally, involved in a F420-dependent anti-oxidant mechanism that protects M.tuberculosis against oxidative stress and bactericidal agents. Catalyzes the F420H(2)-dependent two-electron reduction of quinones to dihydroquinones, thereby preventing the formation of cytotoxic semiquinones obtained by the one-electron reduction pathway. Since menaquinone is the sole quinone electron carrier in the respiratory chain in M.tuberculosis, the physiological electron acceptor for Fqr-mediated F420H(2) oxidation is therefore likely to be the endogenous menaquinone found in the membrane fraction of M.tuberculosis. This chain is Putative F420H(2)-dependent quinone reductase Rv3178, found in Mycobacterium tuberculosis (strain ATCC 25618 / H37Rv).